The following is a 251-amino-acid chain: Astacin (251 aa).

Positions 1 to 15 (MQCAVLLVLLGVVAA) are cleaved as a signal peptide. Positions 16-49 (SPIIPEAARALYYNDGMFEGDIKLRAGRQPARVG) are cleaved as a propeptide — activation peptide. The region spanning 50 to 248 (AAILGDEYLW…INNLYTNECS (199 aa)) is the Peptidase M12A domain. Intrachain disulfides connect C91-C247 and C113-C133. H141 contributes to the Zn(2+) binding site. The active site involves E142. Zn(2+) contacts are provided by H145 and H151. Residues 250 to 251 (RH) constitute a propeptide that is removed on maturation.

In terms of assembly, monomer. Requires Zn(2+) as cofactor.

The catalysed reaction is Hydrolysis of peptide bonds in substrates containing five or more amino acids, preferentially with Ala in P1', and Pro in P2'.. Metalloprotease. This protease prefers to cleave in front of small aliphatic residues (P1'). The presence of Lys or Arg in the P1 and P2 position yields high-turnover substrates. In the P3 position the enzyme prefers Pro &gt; Val &gt; Leu &gt; Ala &gt; Gly. The protein is Astacin of Astacus astacus (Noble crayfish).